The chain runs to 398 residues: Dual-specificity RNA methyltransferase RlmN (398 aa).

The active-site Proton acceptor is the Glu-121. The 244-residue stretch at 127-370 (ETDRGTLCVS…VRTPRGRDIL (244 aa)) folds into the Radical SAM core domain. A disulfide bridge connects residues Cys-134 and Cys-373. Positions 141, 145, and 148 each coordinate [4Fe-4S] cluster. S-adenosyl-L-methionine contacts are provided by residues 199-200 (GE), Ser-231, 253-255 (SLH), and Asn-330. Catalysis depends on Cys-373, which acts as the S-methylcysteine intermediate.

Belongs to the radical SAM superfamily. RlmN family. The cofactor is [4Fe-4S] cluster.

Its subcellular location is the cytoplasm. It carries out the reaction adenosine(2503) in 23S rRNA + 2 reduced [2Fe-2S]-[ferredoxin] + 2 S-adenosyl-L-methionine = 2-methyladenosine(2503) in 23S rRNA + 5'-deoxyadenosine + L-methionine + 2 oxidized [2Fe-2S]-[ferredoxin] + S-adenosyl-L-homocysteine. The enzyme catalyses adenosine(37) in tRNA + 2 reduced [2Fe-2S]-[ferredoxin] + 2 S-adenosyl-L-methionine = 2-methyladenosine(37) in tRNA + 5'-deoxyadenosine + L-methionine + 2 oxidized [2Fe-2S]-[ferredoxin] + S-adenosyl-L-homocysteine. Its function is as follows. Specifically methylates position 2 of adenine 2503 in 23S rRNA and position 2 of adenine 37 in tRNAs. m2A2503 modification seems to play a crucial role in the proofreading step occurring at the peptidyl transferase center and thus would serve to optimize ribosomal fidelity. The sequence is that of Dual-specificity RNA methyltransferase RlmN from Rhodopseudomonas palustris (strain BisB5).